We begin with the raw amino-acid sequence, 152 residues long: Transcriptional regulator MraZ (152 aa).

SpoVT-AbrB domains follow at residues 5–52 and 81–124; these read ASAI…PLDE and AHEC…DETA.

The protein belongs to the MraZ family. As to quaternary structure, forms oligomers.

It is found in the cytoplasm. The protein localises to the nucleoid. The sequence is that of Transcriptional regulator MraZ from Shewanella woodyi (strain ATCC 51908 / MS32).